Reading from the N-terminus, the 92-residue chain is Small ribosomal subunit protein uS19c (92 aa).

It belongs to the universal ribosomal protein uS19 family. In terms of assembly, component of the chloroplast small ribosomal subunit (SSU). Mature 70S chloroplast ribosomes of higher plants consist of a small (30S) and a large (50S) subunit. The 30S small subunit contains 1 molecule of ribosomal RNA (16S rRNA) and 24 different proteins. The 50S large subunit contains 3 rRNA molecules (23S, 5S and 4.5S rRNA) and 33 different proteins. uS19c binds directly to 16S ribosomal RNA.

It localises to the plastid. The protein resides in the chloroplast. Its function is as follows. Component of the chloroplast ribosome (chloro-ribosome), a dedicated translation machinery responsible for the synthesis of chloroplast genome-encoded proteins, including proteins of the transcription and translation machinery and components of the photosynthetic apparatus. In Spinacia oleracea (Spinach), this protein is Small ribosomal subunit protein uS19c (rps19).